The primary structure comprises 291 residues: Serine/threonine-protein phosphatase Pgam5, mitochondrial (291 aa).

Residues Phe7–Leu23 form a helical membrane-spanning segment. The disordered stretch occupies residues Lys59 to Ser78. The segment covering Asn67–Asn77 has biased composition (polar residues).

It belongs to the phosphoglycerate mutase family. BPG-dependent PGAM subfamily. In terms of assembly, interacts with Pk92B/ASK1.

The protein localises to the mitochondrion outer membrane. The catalysed reaction is O-phospho-L-seryl-[protein] + H2O = L-seryl-[protein] + phosphate. The enzyme catalyses O-phospho-L-threonyl-[protein] + H2O = L-threonyl-[protein] + phosphate. Functionally, displays phosphatase activity for serine/threonine residues, and dephosphorylates and activates Pk92B kinase. Has apparently no phosphoglycerate mutase activity. This is Serine/threonine-protein phosphatase Pgam5, mitochondrial from Drosophila willistoni (Fruit fly).